A 31-amino-acid polypeptide reads, in one-letter code: Photosystem II reaction center protein T (31 aa).

The helical transmembrane segment at 3–23 (SFAYILILGLAIATLFFAIAF) threads the bilayer.

The protein belongs to the PsbT family. In terms of assembly, PSII is composed of 1 copy each of membrane proteins PsbA, PsbB, PsbC, PsbD, PsbE, PsbF, PsbH, PsbI, PsbJ, PsbK, PsbL, PsbM, PsbT, PsbX, PsbY, PsbZ, Psb30/Ycf12, peripheral proteins PsbO, CyanoQ (PsbQ), PsbU, PsbV and a large number of cofactors. It forms dimeric complexes.

The protein resides in the cellular thylakoid membrane. In terms of biological role, found at the monomer-monomer interface of the photosystem II (PS II) dimer, plays a role in assembly and dimerization of PSII. PSII is a light-driven water plastoquinone oxidoreductase, using light energy to abstract electrons from H(2)O, generating a proton gradient subsequently used for ATP formation. This is Photosystem II reaction center protein T from Synechococcus sp. (strain CC9311).